The chain runs to 586 residues: Protein translocase subunit SecD (586 aa).

Helical transmembrane passes span 7–27 (LILILLVTFFACLLIFPTLKW), 418–438 (SALALCLVFLFICVYYGLSGV), 439–459 (VAGFSLVIYNVFLILAILSAF), 465–485 (LTSIAGLILTMGMAVDINIVI), 521–541 (TFIAVLFLTLLGTGVIQGFAW), and 546–566 (GIVASLFSSLIFSRFILEFII).

Belongs to the SecD/SecF family. SecD subfamily. As to quaternary structure, forms a complex with SecF. Part of the essential Sec protein translocation apparatus which comprises SecA, SecYEG and auxiliary proteins SecDF. Other proteins may also be involved.

The protein resides in the cell inner membrane. In terms of biological role, part of the Sec protein translocase complex. Interacts with the SecYEG preprotein conducting channel. SecDF uses the proton motive force (PMF) to complete protein translocation after the ATP-dependent function of SecA. The chain is Protein translocase subunit SecD from Borreliella burgdorferi (strain ATCC 35210 / DSM 4680 / CIP 102532 / B31) (Borrelia burgdorferi).